Here is a 228-residue protein sequence, read N- to C-terminus: DNA-3-methyladenine glycosylase 1 (228 aa).

The Proton acceptor role is filled by Asp170.

It belongs to the alkylbase DNA glycosidase AlkA family.

It carries out the reaction Hydrolysis of alkylated DNA, releasing 3-methyladenine, 3-methylguanine, 7-methylguanine and 7-methyladenine.. In terms of biological role, hydrolysis of the deoxyribose N-glycosidic bond to excise 3-methyladenine or 7-methyladenine from the damaged DNA polymer formed by alkylation lesions. Can release ethylated and propylated bases from DNA in addition to 3-methyladenine. The protein is DNA-3-methyladenine glycosylase 1 (mag1) of Schizosaccharomyces pombe (strain 972 / ATCC 24843) (Fission yeast).